The chain runs to 212 residues: 3-isopropylmalate dehydratase small subunit (212 aa).

It belongs to the LeuD family. LeuD type 1 subfamily. As to quaternary structure, heterodimer of LeuC and LeuD.

The enzyme catalyses (2R,3S)-3-isopropylmalate = (2S)-2-isopropylmalate. Its pathway is amino-acid biosynthesis; L-leucine biosynthesis; L-leucine from 3-methyl-2-oxobutanoate: step 2/4. Catalyzes the isomerization between 2-isopropylmalate and 3-isopropylmalate, via the formation of 2-isopropylmaleate. In Laribacter hongkongensis (strain HLHK9), this protein is 3-isopropylmalate dehydratase small subunit.